The sequence spans 376 residues: UDP-N-acetylglucosamine--N-acetylmuramyl-(pentapeptide) pyrophosphoryl-undecaprenol N-acetylglucosamine transferase (376 aa).

UDP-N-acetyl-alpha-D-glucosamine contacts are provided by residues Thr-14–Gly-16, Asn-128, Arg-169, Ser-201, Ile-256, and Gln-301.

It belongs to the glycosyltransferase 28 family. MurG subfamily.

The protein localises to the cell inner membrane. It catalyses the reaction di-trans,octa-cis-undecaprenyl diphospho-N-acetyl-alpha-D-muramoyl-L-alanyl-D-glutamyl-meso-2,6-diaminopimeloyl-D-alanyl-D-alanine + UDP-N-acetyl-alpha-D-glucosamine = di-trans,octa-cis-undecaprenyl diphospho-[N-acetyl-alpha-D-glucosaminyl-(1-&gt;4)]-N-acetyl-alpha-D-muramoyl-L-alanyl-D-glutamyl-meso-2,6-diaminopimeloyl-D-alanyl-D-alanine + UDP + H(+). It functions in the pathway cell wall biogenesis; peptidoglycan biosynthesis. Functionally, cell wall formation. Catalyzes the transfer of a GlcNAc subunit on undecaprenyl-pyrophosphoryl-MurNAc-pentapeptide (lipid intermediate I) to form undecaprenyl-pyrophosphoryl-MurNAc-(pentapeptide)GlcNAc (lipid intermediate II). This chain is UDP-N-acetylglucosamine--N-acetylmuramyl-(pentapeptide) pyrophosphoryl-undecaprenol N-acetylglucosamine transferase, found in Phocaeicola vulgatus (strain ATCC 8482 / DSM 1447 / JCM 5826 / CCUG 4940 / NBRC 14291 / NCTC 11154) (Bacteroides vulgatus).